We begin with the raw amino-acid sequence, 461 residues long: tRNA modification GTPase MnmE (461 aa).

(6S)-5-formyl-5,6,7,8-tetrahydrofolate contacts are provided by arginine 27, glutamate 89, and arginine 128. A TrmE-type G domain is found at 224–382 (GLATAIVGRP…LEELINKLFF (159 aa)). Asparagine 234 contacts K(+). Residues 234 to 239 (NVGKSS), 253 to 259 (TDVAGTT), and 278 to 281 (DTAG) contribute to the GTP site. Serine 238 lines the Mg(2+) pocket. 3 residues coordinate K(+): threonine 253, valine 255, and threonine 258. Threonine 259 serves as a coordination point for Mg(2+). Lysine 461 provides a ligand contact to (6S)-5-formyl-5,6,7,8-tetrahydrofolate.

It belongs to the TRAFAC class TrmE-Era-EngA-EngB-Septin-like GTPase superfamily. TrmE GTPase family. As to quaternary structure, homodimer. Heterotetramer of two MnmE and two MnmG subunits. Requires K(+) as cofactor.

It is found in the cytoplasm. In terms of biological role, exhibits a very high intrinsic GTPase hydrolysis rate. Involved in the addition of a carboxymethylaminomethyl (cmnm) group at the wobble position (U34) of certain tRNAs, forming tRNA-cmnm(5)s(2)U34. This is tRNA modification GTPase MnmE from Lactobacillus helveticus (strain DPC 4571).